Here is an 836-residue protein sequence, read N- to C-terminus: Taste receptor type 1 member 2 (836 aa).

The first 19 residues, 1 to 19 (MGPRAKAVCSLFILLQVLA), serve as a signal peptide directing secretion. At 20–565 (EPAENSDFYL…AFLEWHEPST (546 aa)) the chain is on the extracellular side. N-linked (GlcNAc...) asparagine glycans are attached at residues N84, N292, N312, N351, N427, N479, N486, N526, and N546. The helical transmembrane segment at 566 to 586 (IFVVMLTILGFLSTLAIMVIF) threads the bilayer. Residues 587 to 601 (WRHLHTPVVRSAGGP) lie on the Cytoplasmic side of the membrane. The chain crosses the membrane as a helical span at residues 602-622 (MCFLMLVPLLLAYAMVPMYIG). Residues 623 to 634 (QPTFFSCLWRQT) are Extracellular-facing. Residues 635–655 (FFTLCFTICISCITVRSFQIV) form a helical membrane-spanning segment. The Cytoplasmic segment spans residues 656–680 (CIFKMARRLPRAYGYWVRCHGPYVF). A helical transmembrane segment spans residues 681-701 (VASFMVLKVVIVAGNVLATTA). Residues 702–724 (NPTARPDPDDPNIMVLSCNYRRA) are Extracellular-facing. Residues 725-745 (LLFNTSLDLLLSVAGFSFAYM) form a helical membrane-spanning segment. The Cytoplasmic segment spans residues 746–757 (GKELPTNYNEAK). A helical membrane pass occupies residues 758 to 778 (FITLCMTFYFTSSVSLCTFMS). Residues 779–781 (VYD) lie on the Extracellular side of the membrane. A helical membrane pass occupies residues 782 to 802 (GVLVTILDLLITVLNLLGISF). The Cytoplasmic portion of the chain corresponds to 803-836 (GYFGPKCYMVLFYPERNTQVYFSSMIQGYTMGKD).

It belongs to the G-protein coupled receptor 3 family. TAS1R subfamily. In terms of assembly, forms heterodimers with TAS1R3.

Its subcellular location is the cell membrane. In terms of biological role, putative taste receptor. TAS1R2/TAS1R3 recognizes diverse natural and synthetic sweeteners. This is Taste receptor type 1 member 2 (TAS1R2) from Canis lupus familiaris (Dog).